Consider the following 162-residue polypeptide: uncharacterized protein (162 aa).

Residues 6–71 (LDDLDRAILK…PIKPRKLALV (66 aa)) enclose the HTH asnC-type domain. The segment at residues 25 to 44 (IAEISNQLKKPESTVHFRIK) is a DNA-binding region (H-T-H motif).

This is an uncharacterized protein from Pyrococcus abyssi (strain GE5 / Orsay).